The following is a 180-amino-acid chain: Ribulose bisphosphate carboxylase small subunit, chloroplastic (180 aa).

The N-terminal 56 residues, 1–56 (MASSIMSSAAVATRSNGAQASMVAPFTGLKSNASFPVSRKTNLDITSIASNGGRVR), are a transit peptide targeting the chloroplast.

The protein belongs to the RuBisCO small chain family. In terms of assembly, heterohexadecamer of 8 large and 8 small subunits.

It localises to the plastid. Its subcellular location is the chloroplast. RuBisCO catalyzes two reactions: the carboxylation of D-ribulose 1,5-bisphosphate, the primary event in carbon dioxide fixation, as well as the oxidative fragmentation of the pentose substrate. Both reactions occur simultaneously and in competition at the same active site. Although the small subunit is not catalytic it is essential for maximal activity. This chain is Ribulose bisphosphate carboxylase small subunit, chloroplastic, found in Stellaria longipes (Longstalk starwort).